The chain runs to 357 residues: H-2 class I histocompatibility antigen, D-37 alpha chain (357 aa).

The signal sequence occupies residues 1 to 20 (MLLFAHLLQLLVSATVPTQS). The alpha-1 stretch occupies residues 21 to 110 (SPHSLRYFTT…LLGYYNQSND (90 aa)). Residues 21-304 (SPHSLRYFTT…EPPPSTVSNM (284 aa)) are Extracellular-facing. An N-linked (GlcNAc...) asparagine glycan is attached at Asn-106. The tract at residues 111-202 (ESHTLQWMYG…RLGNETLQRS (92 aa)) is alpha-2. Cys-121 and Cys-184 form a disulfide bridge. The N-linked (GlcNAc...) asparagine glycan is linked to Asn-196. Positions 203 to 294 (DPPKAHVTHH…GLPEPLTLRW (92 aa)) are alpha-3. One can recognise an Ig-like C1-type domain in the interval 205-293 (PKAHVTHHPR…EGLPEPLTLR (89 aa)). The cysteines at positions 223 and 279 are disulfide-linked. A connecting peptide region spans residues 295-304 (EPPPSTVSNM). The chain crosses the membrane as a helical span at residues 305-327 (VIIAVLVVLGAVIILGAVVAFVM). At 328 to 357 (KRRRHIGVKGCYAHVLGSKSFQTSDWPQKA) the chain is on the cytoplasmic side. Ser-347 is subject to Phosphoserine.

The protein belongs to the MHC class I family. As to quaternary structure, heterodimer of an alpha chain and a beta chain (beta-2-microglobulin).

The protein resides in the membrane. In terms of biological role, involved in the presentation of foreign antigens to the immune system. The chain is H-2 class I histocompatibility antigen, D-37 alpha chain (H2-T23) from Mus musculus (Mouse).